The sequence spans 54 residues: Preprotein translocase subunit SecG (54 aa).

Residues 1–30 (MSKNKQDAGLSTSAGLVRYMDEDASKIKIA) are Cytoplasmic-facing. A helical transmembrane segment spans residues 31-52 (PEKVLGITISIMVLLFILNYGL). The Extracellular segment spans residues 53-54 (LA).

Belongs to the SEC61-beta family. In terms of assembly, component of the protein translocase complex. Heterotrimer consisting of alpha (SecY), beta (SecG) and gamma (SecE) subunits. Can form oligomers of the heterotrimer.

It localises to the cell membrane. Its function is as follows. Involved in protein export. The function of the beta subunit is unknown, but it may be involved in stabilization of the trimeric complex. The sequence is that of Preprotein translocase subunit SecG from Methanococcus aeolicus (strain ATCC BAA-1280 / DSM 17508 / OCM 812 / Nankai-3).